We begin with the raw amino-acid sequence, 56 residues long: ETMLDRIASGDLESSVDDPRSAEDKRFESHIEQGKPYKELRMEVGKQTLKYAQEEL.

Positions 1–30 (ETMLDRIASGDLESSVDDPRSAEDKRFESH) are disordered. The span at 17-30 (DDPRSAEDKRFESH) shows a compositional bias: basic and acidic residues.

This sequence belongs to the picornaviridae polyprotein family. Homopentamer. Homooligomer. In terms of assembly, interacts with capsid protein VP2. Interacts with capsid protein VP3. Post-translationally, specific enzymatic cleavages by viral protease in vivo yield a variety of precursors and mature proteins. Polyprotein processing intermediates are produced, such as P1-2A which is a functional precursor of the structural proteins, VP0 which is a VP4-VP2 precursor, VP1-2A precursor, 3ABC precursor which is a stable and catalytically active precursor of 3A, 3B and 3C proteins, 3AB and 3CD precursors. The assembly signal 2A is removed from VP1-2A by a host protease, possibly host Cathepsin L. This cleavage occurs over a region of 3 amino-acids probably generating VP1 proteins with heterogeneous C-termini. In terms of processing, the assembly signal 2A is removed from VP1-2A by a host protease, possibly host Cathepsin L in naked virions. This cleavage does not occur in enveloped virions. This cleavage occurs over a region of 3 amino-acids probably generating VP1 proteins with heterogeneous C-termini.

It is found in the virion. Its subcellular location is the host endosome. It localises to the host multivesicular body. In terms of biological role, capsid proteins VP1, VP2, and VP3 form a closed capsid enclosing the viral positive strand RNA genome. All these proteins contain a beta-sheet structure called beta-barrel jelly roll. Together they form an icosahedral capsid (T=3) composed of 60 copies of each VP1, VP2, and VP3, with a diameter of approximately 300 Angstroms. VP1 is situated at the 12 fivefold axes, whereas VP2 and VP3 are located at the quasi-sixfold axes. The naked capsid interacts with the host receptor HAVCR1 to provide virion attachment to and probably entry into the target cell. Its function is as follows. Precursor component of immature procapsids that corresponds to an extended form of the structural protein VP1. After maturation, possibly by the host Cathepsin L, the assembly signal 2A is cleaved to give rise to the mature VP1 protein. This is Genome polyprotein from Callithrix (Owl-faced monkey).